The primary structure comprises 178 residues: Large ribosomal subunit protein bL25 (178 aa).

The protein belongs to the bacterial ribosomal protein bL25 family. CTC subfamily. In terms of assembly, part of the 50S ribosomal subunit; part of the 5S rRNA/L5/L18/L25 subcomplex. Contacts the 5S rRNA. Binds to the 5S rRNA independently of L5 and L18.

Its function is as follows. This is one of the proteins that binds to the 5S RNA in the ribosome where it forms part of the central protuberance. The chain is Large ribosomal subunit protein bL25 from Helicobacter pylori (strain HPAG1).